We begin with the raw amino-acid sequence, 71 residues long: DNA-directed RNA polymerase subunit epsilon (71 aa).

It belongs to the RNA polymerase subunit epsilon family. In terms of assembly, RNAP is composed of a core of 2 alpha, a beta and a beta' subunit. The core is associated with a delta subunit, and at least one of epsilon or omega. When a sigma factor is associated with the core the holoenzyme is formed, which can initiate transcription.

The enzyme catalyses RNA(n) + a ribonucleoside 5'-triphosphate = RNA(n+1) + diphosphate. Functionally, a non-essential component of RNA polymerase (RNAP). In Geobacillus kaustophilus (strain HTA426), this protein is DNA-directed RNA polymerase subunit epsilon.